A 396-amino-acid polypeptide reads, in one-letter code: L-lactate dehydrogenase (396 aa).

Residues 1-380 (MIISAASDYR…SGDSLVQELG (380 aa)) enclose the FMN hydroxy acid dehydrogenase domain. Residue Tyr24 coordinates substrate. The FMN site is built by Ser106 and Gln127. Position 129 (Tyr129) interacts with substrate. Residue Thr155 participates in FMN binding. Residue Arg164 participates in substrate binding. Lys251 serves as a coordination point for FMN. Catalysis depends on His275, which acts as the Proton acceptor. Arg278 serves as a coordination point for substrate. An FMN-binding site is contributed by 306-330 (DSGIRNGLDVVRMIALGADTVLLGR).

Belongs to the FMN-dependent alpha-hydroxy acid dehydrogenase family. It depends on FMN as a cofactor.

It is found in the cell inner membrane. It catalyses the reaction (S)-lactate + A = pyruvate + AH2. Functionally, catalyzes the conversion of L-lactate to pyruvate. Is coupled to the respiratory chain. This Salmonella newport (strain SL254) protein is L-lactate dehydrogenase.